The following is a 151-amino-acid chain: Gene 55 protein (151 aa).

The polypeptide is Gene 55 protein (55) (Mycobacterium phage D29 (Mycobacteriophage D29)).